A 67-amino-acid chain; its full sequence is MRIHYLLFALLFLFLVPVPGHGGIINTLQKYYCRVRGGRCAVLTCLPKEEQIGKCSTRGRKCCRRKK.

Positions 1–22 (MRIHYLLFALLFLFLVPVPGHG) are cleaved as a signal peptide. Intrachain disulfides connect cysteine 33–cysteine 62, cysteine 40–cysteine 55, and cysteine 45–cysteine 63.

Belongs to the beta-defensin family.

It localises to the secreted. Its function is as follows. Exhibits antimicrobial activity against Gram-positive and Gram-negative bacteria. In Pan troglodytes (Chimpanzee), this protein is Beta-defensin 103A (DEFB103A).